The chain runs to 664 residues: E3 ubiquitin-protein ligase RNF139 (664 aa).

Ala2 carries the post-translational modification N-acetylalanine. Transmembrane regions (helical) follow at residues 51 to 71 (IVLQ…VLIL), 85 to 105 (AFLL…HIDF), 125 to 145 (SLWM…VTLL), 154 to 174 (LIIL…PLHI), 178 to 198 (LLFT…AVKL), 293 to 313 (GMSA…LAFI), 323 to 343 (LGFV…LSGL), 356 to 376 (MCLL…PVLM), 390 to 410 (FPVL…SYVL), 420 to 440 (LFAV…SLTV), 469 to 489 (SIIE…TMMF), and 495 to 512 (IRAF…YLQA). An RING-type; atypical zinc finger spans residues 547-586 (CAICYHEFTTSARITPCNHYFHALCLRKWLYIQDTCPMCH). The segment at 601-664 (VSNNNGFIPP…AAEEFNDDTD (64 aa)) is disordered. The segment covering 616–628 (EAVREAAAESDRE) has biased composition (basic and acidic residues). Positions 629–639 (LNEDDSTDCDD) are enriched in acidic residues. Ser634 bears the Phosphoserine mark. Phosphothreonine is present on residues Thr635 and Thr663.

As to quaternary structure, interacts with MHC class I and HM13. Interacts with VHL. Component of SCAP-SREBP complex composed of SREBF2, SCAP and RNF139; the complex hampers the interaction between SCAP and SEC24B, thereby reducing SREBF2 proteolytic processing. Interacts with SREBF2 (via C-terminal domain). Interacts with SCAP; the interaction inhibits the interaction of SCAP with SEC24B and hampering the ER to Golgi transport of the SCAP-SREBP complex. Interacts with SEC24B. Interacts with INSIG1 and INSIG2. Interacts with EIF3F and EIF3H; the interaction leads to protein translation inhibitions in a ubiquitination-dependent manner. Interacts with XBP1 isoform 1; the interaction induces ubiquitination and degradation of XBP1 isoform 1. Interacts with AUP1, AMFR and UBE2G2; interaction with AUP1 facilitates interaction of RNF139 with ubiquitin-conjugating enzyme UBE2G2 and ubiquitin ligase AMFR/gp78, leading to sterol-induced ubiquitination of HMGCR and its subsequent proteasomal degradation. In terms of processing, autoubiquitinated. Ubiquitination is induced by sterol and leads to ist degradation via the ubiquitin-proteasome pathway. Highly expressed in testis, placenta and adrenal gland. Moderate expression in heart, brain, liver, skeletal muscle and pancreas, and low expression in lung and kidney.

It localises to the endoplasmic reticulum membrane. It catalyses the reaction S-ubiquitinyl-[E2 ubiquitin-conjugating enzyme]-L-cysteine + [acceptor protein]-L-lysine = [E2 ubiquitin-conjugating enzyme]-L-cysteine + N(6)-ubiquitinyl-[acceptor protein]-L-lysine.. It functions in the pathway protein modification; protein ubiquitination. Functionally, E3-ubiquitin ligase; acts as a negative regulator of cell proliferation through mechanisms involving G2/M arrest and cell death. Required for MHC class I ubiquitination in cells expressing the cytomegalovirus protein US2 before dislocation from the endoplasmic reticulum (ER). Affects SREBP processing by hindering the SREBP-SCAP complex translocation from the ER to the Golgi, thereby reducing SREBF2 target gene expression. Involved in the sterol-accelerated degradation of HMGCR. This is achieved through binding of RNF139 to INSIG1 and/or INSIG2 at the ER membrane. In addition, interaction of RNF139 with AUP1 facilitates interaction of RNF139 with ubiquitin-conjugating enzyme UBE2G2 and ubiquitin ligase AMFR, leading to ubiquitination of HMGCR. The ubiquitinated HMGCR is then released from the ER into the cytosol for subsequent destruction. Required for INSIG1 ubiquitination. May be required for EIF3 complex ubiquitination. In Homo sapiens (Human), this protein is E3 ubiquitin-protein ligase RNF139.